Here is a 63-residue protein sequence, read N- to C-terminus: Large ribosomal subunit protein eL37 (63 aa).

Zn(2+) contacts are provided by cysteine 20, cysteine 23, cysteine 35, and cysteine 38. The C4-type zinc finger occupies 20 to 38 (CRRCGHHSFNVRKGYCAHC).

This sequence belongs to the eukaryotic ribosomal protein eL37 family. Requires Zn(2+) as cofactor.

Binds to the 23S rRNA. In Thermofilum pendens (strain DSM 2475 / Hrk 5), this protein is Large ribosomal subunit protein eL37.